We begin with the raw amino-acid sequence, 261 residues long: Glutamate racemase (261 aa).

Substrate is bound by residues 9-10 and 41-42; these read DS and YG. Catalysis depends on C73, which acts as the Proton donor/acceptor. Residue 74–75 coordinates substrate; it reads NT. The active-site Proton donor/acceptor is C179. 180 to 181 contacts substrate; the sequence is TH.

Belongs to the aspartate/glutamate racemases family.

The enzyme catalyses L-glutamate = D-glutamate. It participates in cell wall biogenesis; peptidoglycan biosynthesis. Its function is as follows. Provides the (R)-glutamate required for cell wall biosynthesis. This Aliivibrio fischeri (strain MJ11) (Vibrio fischeri) protein is Glutamate racemase.